The primary structure comprises 635 residues: MNQTQPYMDVHSSHLSSAQPYASHAATAGAMAHYPQYHQQPPVLQPASTYGPASSYSQYAYPSGVASSQTAPPPPSTSMSSQVPAQLLPLPVNSHTVTAPGYGNTTGTPMQGFVYDTTGQLAPPGAKPRVTATLWEDEGSLCYQVEAKGVCVARREDNHMINGTKLLNVAGMTRGRRDGILKSEKVRHVVKIGPMHLKGVWIPFERALEFANKEKITDLLYPLFVHNIGGLLYHPTNQTRTNMVVQESQQRRLEGPPSARTPQASQPPALHHHHSMQTSIPSQMPQPPTMSSQPGARPPLDRAHTFPTPPASASSLMGLSNQSSSYDWNNQGMNSGVPNTQPLSIDTTLSNTRSMPTTPATTPPGNNLQGMQSYQSQSGYDTSKPYYSTAPPSHPHYAPQYSLSQYGQPMPPHSYIKNEMAPPAGRAPGGQSETETSDVKPADRYSQSNGHVTAGAGESAPEHESEYVQHDNTGYGASRSSYTYTTNTSVGSLAGEHSQLTNDITGSPQQNGSGRMTPRTGGGPPPQWASGYASPRPTAASSLYNIVSDTRGSSNGAGSENYTVASNTAPTYSMGGSLGSGKRGREDDDMGRPDSQGDYESKRRRTNETTVGGPVGGVLLGLQPMKAGGAMPRRR.

Disordered stretches follow at residues M1–Y21 and S63–Q82. Positions R129–P235 constitute an HTH APSES-type domain. Residues G163 to E184 constitute a DNA-binding region (H-T-H motif). Disordered regions lie at residues Q246–S480 and S498–R635. Composition is skewed to low complexity over residues M276–P294 and S312–S325. Over residues Y326–M355 the composition is skewed to polar residues. The span at P356–Y380 shows a compositional bias: low complexity. Residues A460–Q469 show a composition bias toward basic and acidic residues. Composition is skewed to polar residues over residues S498–S513 and A539–T571. Positions K582–R605 are nuclear localization domain. The span at R583–R592 shows a compositional bias: basic and acidic residues.

It belongs to the EFG1/PHD1/stuA family.

Transcription factor that regulates asexual reproduction. Binds the StuA-response elements (StRE) with the consensus sequence 5'-(A/T)CGCG(T/A)N(A/C)-3' at the promoters of target genes. Controls the expression of 6 secondary metabolite biosynthetic clusters including 2 involved in the synthesis of alkaloids (fumigaclavine and fumitremorgen), 2 clusters of the ETP class (gliotoxin and an unknown ETP-like toxin), a cluster predicted to produce pseurotin A, and the product of the last cluster is unknown. Controls the production of ergot alkaloids during conidiophore development. Controls expression of sspA and gliP. Involved in the induction of immunoglobulin E-independent mast cell degranulation. The protein is Cell pattern formation-associated protein stuA of Aspergillus fumigatus (strain ATCC MYA-4609 / CBS 101355 / FGSC A1100 / Af293) (Neosartorya fumigata).